The sequence spans 72 residues: Metallothionein-like protein 1 (72 aa).

It belongs to the metallothionein superfamily. Type 15 family.

Its function is as follows. Metallothioneins have a high content of cysteine residues that bind various heavy metals. The chain is Metallothionein-like protein 1 from Erythranthe guttata (Yellow monkey flower).